The chain runs to 872 residues: Leucine--tRNA ligase (872 aa).

Positions 42-52 (PYPSGNLHMGH) match the 'HIGH' region motif. Residues 631–635 (KMSKS) carry the 'KMSKS' region motif. ATP is bound at residue Lys-634.

This sequence belongs to the class-I aminoacyl-tRNA synthetase family.

It localises to the cytoplasm. The enzyme catalyses tRNA(Leu) + L-leucine + ATP = L-leucyl-tRNA(Leu) + AMP + diphosphate. This Blochmanniella pennsylvanica (strain BPEN) protein is Leucine--tRNA ligase.